The following is a 269-amino-acid chain: Fructose permease IIC component (269 aa).

The 234-residue stretch at 1–234 (MSSLQIILLL…GALGLCLALL (234 aa)) folds into the PTS EIIC type-4 domain. A run of 7 helical transmembrane segments spans residues 2–22 (SSLQ…ASVL), 35–54 (TLVG…GGTL), 64–86 (VGLA…VITA), 90–110 (IGEG…LTIF), 149–169 (VMIP…AFLG), 181–201 (IGGG…MNIP), and 206–226 (FFYI…GFGA).

The protein resides in the cell membrane. In terms of biological role, the phosphoenolpyruvate-dependent sugar phosphotransferase system (PTS), a major carbohydrate active -transport system, catalyzes the phosphorylation of incoming sugar substrates concomitant with their translocation across the cell membrane. This system is involved in fructose transport. This is Fructose permease IIC component (levF) from Bacillus subtilis (strain 168).